Consider the following 561-residue polypeptide: Cytosolic purine 5'-nucleotidase (561 aa).

D52 (nucleophile) is an active-site residue. D52 and D54 together coordinate GMP. 2 residues coordinate IMP: D52 and D54. Mg(2+)-binding residues include D52 and D54. D54 functions as the Proton donor in the catalytic mechanism. R144 provides a ligand contact to (2R)-2,3-bisphosphoglycerate. ATP-binding residues include R144 and N154. DATP is bound by residues R144 and N154. N154 provides a ligand contact to adenosine. N154 contributes to the P(1),P(4)-bis(5'-adenosyl) tetraphosphate binding site. GMP-binding residues include R202, D206, K215, T249, and N250. 7 residues coordinate IMP: R202, D206, K215, T249, N250, S251, and K292. K292 contacts GMP. D351 is a binding site for Mg(2+). Residue K362 participates in (2R)-2,3-bisphosphoglycerate binding. K362 contributes to the P(1),P(4)-bis(5'-adenosyl) tetraphosphate binding site. S418 is subject to Phosphoserine. Adenosine contacts are provided by M436 and Q453. ATP is bound by residues Q453 and R456. Q453 and R456 together coordinate dATP. Residue Q453 participates in P(1),P(4)-bis(5'-adenosyl) tetraphosphate binding. Residue Y457 participates in (2R)-2,3-bisphosphoglycerate binding. Y457 is a P(1),P(4)-bis(5'-adenosyl) tetraphosphate binding site. Phosphoserine occurs at positions 502, 511, and 527. A disordered region spans residues 538–561; sequence PLAPQEITHCHDEDDDEEEEEEEE. The required for tetramer assembly stretch occupies residues 548 to 561; sequence HDEDDDEEEEEEEE. Positions 550–561 are enriched in acidic residues; sequence EDDDEEEEEEEE.

It belongs to the 5'(3')-deoxyribonucleotidase family. Homotetramer. The cofactor is Mg(2+). In terms of tissue distribution, widely expressed.

The protein resides in the cytoplasm. It is found in the cytosol. It catalyses the reaction a ribonucleoside 5'-phosphate + H2O = a ribonucleoside + phosphate. The enzyme catalyses a 2'-deoxyribonucleoside + a ribonucleoside 5'-phosphate = a ribonucleoside + a 2'-deoxyribonucleoside 5'-phosphate. It carries out the reaction IMP + H2O = inosine + phosphate. The catalysed reaction is GMP + H2O = guanosine + phosphate. It catalyses the reaction dIMP + H2O = 2'-deoxyinosine + phosphate. The enzyme catalyses dGMP + H2O = 2'-deoxyguanosine + phosphate. It carries out the reaction XMP + H2O = xanthosine + phosphate. The catalysed reaction is inosine + GMP = guanosine + IMP. It catalyses the reaction dGMP + inosine = 2'-deoxyguanosine + IMP. The enzyme catalyses dIMP + inosine = 2'-deoxyinosine + IMP. It carries out the reaction inosine + UMP = uridine + IMP. The catalysed reaction is inosine + CMP = cytidine + IMP. It catalyses the reaction inosine + AMP = IMP + adenosine. With respect to regulation, allosterically activated by various compounds including ATP, 2,3-BPG/2,3-Bisphosphoglyceric acid and Ap4A/P1,P4-bis(5'-adenosyl) tetraphosphate. Binding of an allosteric activator is a prerequisiste to magnesium and substrate binding. Inhibited by inorganic phosphate. In terms of biological role, broad specificity cytosolic 5'-nucleotidase that catalyzes the dephosphorylation of 6-hydroxypurine nucleoside 5'-monophosphates. In addition, possesses a phosphotransferase activity by which it can transfer a phosphate from a donor nucleoside monophosphate to an acceptor nucleoside, preferably inosine, deoxyinosine and guanosine. Has the highest activities for IMP and GMP followed by dIMP, dGMP and XMP. Could also catalyze the transfer of phosphates from pyrimidine monophosphates but with lower efficiency. Through these activities regulates the purine nucleoside/nucleotide pools within the cell. The polypeptide is Cytosolic purine 5'-nucleotidase (Homo sapiens (Human)).